A 255-amino-acid polypeptide reads, in one-letter code: Hydroxyacylglutathione hydrolase (255 aa).

7 residues coordinate Zn(2+): histidine 53, histidine 55, aspartate 57, histidine 58, histidine 110, aspartate 127, and histidine 165.

This sequence belongs to the metallo-beta-lactamase superfamily. Glyoxalase II family. As to quaternary structure, monomer. Requires Zn(2+) as cofactor.

It carries out the reaction an S-(2-hydroxyacyl)glutathione + H2O = a 2-hydroxy carboxylate + glutathione + H(+). It participates in secondary metabolite metabolism; methylglyoxal degradation; (R)-lactate from methylglyoxal: step 2/2. Thiolesterase that catalyzes the hydrolysis of S-D-lactoyl-glutathione to form glutathione and D-lactic acid. This chain is Hydroxyacylglutathione hydrolase, found in Xanthomonas euvesicatoria pv. vesicatoria (strain 85-10) (Xanthomonas campestris pv. vesicatoria).